A 129-amino-acid chain; its full sequence is Small ribosomal subunit protein uS9 (129 aa).

Residues 107–129 are disordered; that stretch reads SRVVERKKPGKKKARRSPQFSKR. The segment covering 114–129 has biased composition (basic residues); sequence KPGKKKARRSPQFSKR.

This sequence belongs to the universal ribosomal protein uS9 family.

This Sulfurovum sp. (strain NBC37-1) protein is Small ribosomal subunit protein uS9.